Here is a 283-residue protein sequence, read N- to C-terminus: 4-hydroxybenzoate octaprenyltransferase (283 aa).

Transmembrane regions (helical) follow at residues 16–36, 40–60, 85–105, 108–128, 135–155, 160–180, 204–224, 226–246, and 263–283; these read PIGT…AGAG, LRIV…GCVI, ISAT…FGLV, LNTE…LYPF, LPQI…FTAL, WFIA…YDTE, FDRL…GWIL, LITV…LFAY, and FLHN…HYWF.

This sequence belongs to the UbiA prenyltransferase family. Requires Mg(2+) as cofactor.

The protein localises to the cell inner membrane. The enzyme catalyses all-trans-octaprenyl diphosphate + 4-hydroxybenzoate = 4-hydroxy-3-(all-trans-octaprenyl)benzoate + diphosphate. The protein operates within cofactor biosynthesis; ubiquinone biosynthesis. In terms of biological role, catalyzes the prenylation of para-hydroxybenzoate (PHB) with an all-trans polyprenyl group. Mediates the second step in the final reaction sequence of ubiquinone-8 (UQ-8) biosynthesis, which is the condensation of the polyisoprenoid side chain with PHB, generating the first membrane-bound Q intermediate 3-octaprenyl-4-hydroxybenzoate. This Idiomarina loihiensis (strain ATCC BAA-735 / DSM 15497 / L2-TR) protein is 4-hydroxybenzoate octaprenyltransferase.